The primary structure comprises 193 residues: Segregation and condensation protein B (193 aa).

This sequence belongs to the ScpB family. Homodimer. Homodimerization may be required to stabilize the binding of ScpA to the Smc head domains. Component of a cohesin-like complex composed of ScpA, ScpB and the Smc homodimer, in which ScpA and ScpB bind to the head domain of Smc. The presence of the three proteins is required for the association of the complex with DNA.

Its subcellular location is the cytoplasm. Participates in chromosomal partition during cell division. May act via the formation of a condensin-like complex containing Smc and ScpA that pull DNA away from mid-cell into both cell halves. The sequence is that of Segregation and condensation protein B from Streptococcus thermophilus (strain ATCC BAA-250 / LMG 18311).